The sequence spans 119 residues: Large ribosomal subunit protein bL20 (119 aa).

This sequence belongs to the bacterial ribosomal protein bL20 family.

In terms of biological role, binds directly to 23S ribosomal RNA and is necessary for the in vitro assembly process of the 50S ribosomal subunit. It is not involved in the protein synthesizing functions of that subunit. The sequence is that of Large ribosomal subunit protein bL20 from Syntrophus aciditrophicus (strain SB).